Reading from the N-terminus, the 844-residue chain is Serrate RNA effector molecule homolog B (844 aa).

Disordered regions lie at residues 1–90 (MADS…HGSD), 277–401 (EAAK…PRPL), 555–575 (ELLS…GNPT), and 794–825 (PNPY…MRGD). Composition is skewed to basic and acidic residues over residues 16–73 (FRRE…RHDI) and 277–337 (EAAK…ETRK). Residues 349-359 (SDDGSDSESDT) show a composition bias toward acidic residues. Over residues 376–397 (DTPKKEEETEKPKEKPKEDTVK) the composition is skewed to basic and acidic residues.

The protein belongs to the ARS2 family. As to quaternary structure, interacts ncbp1/cbp80.

It localises to the nucleus. It is found in the nucleoplasm. Its subcellular location is the cytoplasm. Its function is as follows. Acts as a mediator between the cap-binding complex (CBC) and the primary microRNAs (miRNAs) processing machinery during cell proliferation. Contributes to the stability and delivery of capped primary miRNA transcripts to the primary miRNA processing complex, thereby playing a role in RNA-mediated gene silencing (RNAi) by miRNAs. This Xenopus laevis (African clawed frog) protein is Serrate RNA effector molecule homolog B (srrt-b).